We begin with the raw amino-acid sequence, 193 residues long: Thymidine kinase (193 aa).

Residues 14 to 21 and 87 to 90 contribute to the ATP site; these read GCMFSGKT and DELH. Glu88 functions as the Proton acceptor in the catalytic mechanism. Zn(2+) is bound by residues Cys147, Cys150, Cys185, and Cys188.

The protein belongs to the thymidine kinase family. Homotetramer.

The protein resides in the cytoplasm. The enzyme catalyses thymidine + ATP = dTMP + ADP + H(+). The chain is Thymidine kinase from Roseiflexus sp. (strain RS-1).